We begin with the raw amino-acid sequence, 487 residues long: ATP-dependent rRNA helicase RRP3 (487 aa).

The tract at residues 22 to 67 (IKRKALEKQQQAHANEPSPSDEDSAQSNSKDSNSNEQPEESEEIFE) is disordered. The Q motif motif lies at 67-95 (ESFTELDLVPELIEACKNLNYNKPTPIQS). Residues 98–270 (IPPALKGSDI…RASLTNPVKC (173 aa)) enclose the Helicase ATP-binding domain. Position 111–118 (111–118 (AQTGSGKT)) interacts with ATP. The DEAD box motif lies at 217-220 (DEAD). The 145-residue stretch at 298–442 (LIYLLNEFIG…ENVDKDAILA (145 aa)) folds into the Helicase C-terminal domain. A disordered region spans residues 459 to 487 (NRRNKEKQARGKGRRGRMATRDNMDREER). The segment covering 477–487 (ATRDNMDREER) has biased composition (basic and acidic residues).

This sequence belongs to the DEAD box helicase family. DDX47/RRP3 subfamily. In terms of assembly, interacts with the SSU processome.

It localises to the nucleus. The enzyme catalyses ATP + H2O = ADP + phosphate + H(+). ATP-dependent rRNA helicase required for pre-ribosomal RNA processing. Involved in the maturation of the 35S-pre-rRNA and to its cleavage to mature 18S rRNA. This chain is ATP-dependent rRNA helicase RRP3, found in Kluyveromyces lactis (strain ATCC 8585 / CBS 2359 / DSM 70799 / NBRC 1267 / NRRL Y-1140 / WM37) (Yeast).